Here is a 654-residue protein sequence, read N- to C-terminus: Glycogen debranching enzyme (654 aa).

The active-site Nucleophile is the D336. E371 functions as the Proton donor in the catalytic mechanism. Residues 459 to 484 (EANGEENRDGTNSNYSDNHGKEGLGG) are disordered.

Belongs to the glycosyl hydrolase 13 family.

The catalysed reaction is Hydrolysis of (1-&gt;6)-alpha-D-glucosidic linkages to branches with degrees of polymerization of three or four glucose residues in limit dextrin.. Its pathway is glycan degradation; glycogen degradation. Functionally, removes maltotriose and maltotetraose chains that are attached by 1,6-alpha-linkage to the limit dextrin main chain, generating a debranched limit dextrin. The protein is Glycogen debranching enzyme of Salmonella typhi.